Reading from the N-terminus, the 225-residue chain is Small ribosomal subunit protein uS3 (225 aa).

A KH type-2 domain is found at 38-106; the sequence is IRKFVQNRFN…PVNLNIIEVK (69 aa).

This sequence belongs to the universal ribosomal protein uS3 family. As to quaternary structure, part of the 30S ribosomal subunit. Forms a tight complex with proteins S10 and S14.

Binds the lower part of the 30S subunit head. Binds mRNA in the 70S ribosome, positioning it for translation. This chain is Small ribosomal subunit protein uS3, found in Leptospira interrogans serogroup Icterohaemorrhagiae serovar copenhageni (strain Fiocruz L1-130).